A 301-amino-acid polypeptide reads, in one-letter code: uncharacterized protein (301 aa).

Disordered regions lie at residues 56–126 and 149–173; these read ESPT…ESDL and LSTE…DASS. Basic and acidic residues predominate over residues 71 to 82; that stretch reads VQKENQKPKDLN. Positions 93–102 are enriched in polar residues; sequence KNSSGLVSQI. The span at 161-173 shows a compositional bias: low complexity; sequence SNTSSSSMSDASS.

This is an uncharacterized protein from Caenorhabditis elegans.